We begin with the raw amino-acid sequence, 224 residues long: uncharacterized protein (224 aa).

This is an uncharacterized protein from Listeria monocytogenes serovar 1/2a (strain ATCC BAA-679 / EGD-e).